The following is a 729-amino-acid chain: Catalase-peroxidase (729 aa).

Residues 1 to 33 are disordered; that stretch reads MSAHNTNESAVGKCPFHEQKEEKSVLARGAGGG. Over residues 15–25 the composition is skewed to basic and acidic residues; that stretch reads PFHEQKEEKSV. A cross-link (tryptophyl-tyrosyl-methioninium (Trp-Tyr) (with M-255)) is located at residues 108–229; sequence WHSAGTYRTV…LGATEMGLIY (122 aa). H109 acts as the Proton acceptor in catalysis. Residues 229–255 constitute a cross-link (tryptophyl-tyrosyl-methioninium (Tyr-Met) (with W-108)); sequence YVNPEGPEASGNPASAAPAIRATFGNM. Residue H270 coordinates heme b.

This sequence belongs to the peroxidase family. Peroxidase/catalase subfamily. As to quaternary structure, homodimer or homotetramer. Heme b serves as cofactor. Formation of the three residue Trp-Tyr-Met cross-link is important for the catalase, but not the peroxidase activity of the enzyme.

It carries out the reaction H2O2 + AH2 = A + 2 H2O. The catalysed reaction is 2 H2O2 = O2 + 2 H2O. In terms of biological role, bifunctional enzyme with both catalase and broad-spectrum peroxidase activity. This Erwinia tasmaniensis (strain DSM 17950 / CFBP 7177 / CIP 109463 / NCPPB 4357 / Et1/99) protein is Catalase-peroxidase.